The chain runs to 336 residues: Putative ALA-interacting subunit 4 (336 aa).

A helical membrane pass occupies residues 36–56 (VILTFLVSGVVFIPLGVICLF). N-linked (GlcNAc...) asparagine glycosylation is present at Asn-94. A compositionally biased stretch (basic and acidic residues) spans 127–142 (RQDGQLRSPKDEHETK). Residues 127-148 (RQDGQLRSPKDEHETKSCAPED) are disordered. N-linked (GlcNAc...) asparagine glycosylation occurs at Asn-167. A helical membrane pass occupies residues 290-310 (FLGIAYLTVGSICLFLAVSFS). Asn-329 is a glycosylation site (N-linked (GlcNAc...) asparagine).

It belongs to the CDC50/LEM3 family. As to expression, expressed in flowers. May be restricted to pollen grains.

Its subcellular location is the membrane. The protein is Putative ALA-interacting subunit 4 (ALIS4) of Arabidopsis thaliana (Mouse-ear cress).